The chain runs to 124 residues: Thioredoxin domain-containing protein C21C3.12c (124 aa).

The Thioredoxin domain occupies 37–124 (PWCPTVRAAL…ANKFSKFIDI (88 aa)). The Nucleophile role is filled by Cys-39.

Belongs to the thioredoxin family.

The protein resides in the cytoplasm. Its subcellular location is the nucleus. The protein is Thioredoxin domain-containing protein C21C3.12c of Schizosaccharomyces pombe (strain 972 / ATCC 24843) (Fission yeast).